The chain runs to 421 residues: MAKRTLGLAKAAKAKKQKKEQEHQESSASPDEESSSSNQLTIELPEEIDANDEISQLKGLHKTYLQSERDNELLVNGIIHECDRLLRENDSENKQPLPAVFHAIYAIALAELSKFHTEELDKVKEFFIAALERVESGLEKNPNDINLLVAKTKILLDQISLQYIAPLTLESDVKELDKEIDELLDAALSVYESVEARAKELKDYSIFDDSETLDILEALDDILDIVDNFGKENQGDDGSDEDDEEDDDEEEKSVELAETHPLYKIKNSDKYDQWWRDHTHLYLDNLEKLENGSPELKREVCHRLGQSYLQESEVPYSVFTKLKYDDEYDGIEELEGLTEKEAQKISQELITKALDYLKQAKDEEDPETWVSIAEAMISLGNLYEVDSKEQEDLYLEAEKILKRANNVTNGKFQEELDNLLP.

2 disordered regions span residues 1–43 (MAKR…LTIE) and 230–259 (GKEN…LAET). A compositionally biased stretch (acidic residues) spans 235-252 (GDDGSDEDDEEDDDEEEK).

It belongs to the ETT1 family.

It localises to the nucleus. Required for correct translation termination and probably involved in regulation of hypoxic gene expression. This is Enhancer of translation termination 1 (ETT1) from Candida albicans (strain SC5314 / ATCC MYA-2876) (Yeast).